Consider the following 227-residue polypeptide: MPTSPFIDDLIRDRRAKRGFLDQPVSIEMVKDILSAAKYAPSSSNTQPWRCYVITGEARERITTAAVEAYRAAPEGLPPEYPFFPQPLHEPYATRFNSFRGQLGDALGIPRSDITLRRRDVERQFRFFDAPVGLIFTMDRRLEWASFICYGCFLQNIMLAAKGRGLDTCTQVFWSMQHPVLRTELNLPDDQMVVAGMSLGWADNSLPENQMSISKMELEEFTTFVHE.

14-18 provides a ligand contact to FMN; that stretch reads RRAKR. Residues serine 44 and isoleucine 109 each contribute to the NADP(+) site. FMN-binding positions include 172-173 and lysine 215; that span reads VF.

It belongs to the nitroreductase family. In terms of assembly, monomer. The cofactor is FMN.

The catalysed reaction is N-phenylhydroxylamine + 2 NADP(+) + H2O = nitrobenzene + 2 NADPH + 2 H(+). It participates in xenobiotic degradation; nitrobenzene degradation. With respect to regulation, inhibited by dicumarol, p-hydroxymercuribenzoate and salicyl hydroxamate. Functionally, involved in the biodegradation of nitroaromatic compounds. Catalyzes the two-electron reduction of nitrobenzene (NB) to produce a nitrosobenzene (NOB) intermediate, which is immediately reduced to hydroxylaminobenzene (HAB) by a second two-electron transfer. Also active on menadione and nitrofurazone. Replacing NADPH with NADH results in a 4-fold decrease in the reaction rate. This is Nitrobenzene nitroreductase from Ectopseudomonas oleovorans (Pseudomonas oleovorans).